A 364-amino-acid polypeptide reads, in one-letter code: Probable protein phosphatase methylesterase 1 (364 aa).

A disordered region spans residues 1–53; it reads MSDDKLDTLPDLQSETSHVTTPHRQNDLLRQAVTHGRPPPVPSTSTSGKKREM. The segment covering 11-23 has biased composition (polar residues); it reads DLQSETSHVTTPH. Catalysis depends on residues Ser-164, Asp-190, and His-316.

It belongs to the AB hydrolase superfamily.

The catalysed reaction is [phosphatase 2A protein]-C-terminal L-leucine methyl ester + H2O = [phosphatase 2A protein]-C-terminal L-leucine + methanol + H(+). Demethylates proteins that have been reversibly carboxymethylated. This Caenorhabditis elegans protein is Probable protein phosphatase methylesterase 1.